A 557-amino-acid chain; its full sequence is Eudesmanediol synthase (557 aa).

Mg(2+) contacts are provided by aspartate 310 and aspartate 314. Substrate is bound by residues aspartate 310, aspartate 314, and arginine 450. The DDXXD motif motif lies at 310–314; it reads DDTFD. Mg(2+) contacts are provided by asparagine 453 and serine 457.

The protein belongs to the terpene synthase family. Monomer. It depends on Mg(2+) as a cofactor. The cofactor is Mn(2+).

The protein resides in the cytoplasm. It catalyses the reaction (2E,6E)-farnesyl diphosphate + 2 H2O = 7-epi-ent-eudesmane-5,11-diol + diphosphate. It functions in the pathway secondary metabolite biosynthesis; terpenoid biosynthesis. Its function is as follows. Component of the volatile terpenes biosynthesis pathways. Dihydroxylated sesquiterpenoid synthase that generates dually hydroxylated products directly from (E,E)-farnesyl diphosphate, primarily eudesmane-2,11-diol, along with two closely related structural isomers. This is Eudesmanediol synthase from Zea mays (Maize).